A 547-amino-acid chain; its full sequence is Chaperonin GroEL (547 aa).

ATP is bound by residues 30–33 (TLGP), K51, 87–91 (DGTTT), G415, 479–481 (NAA), and D495. The segment at 525–547 (PKEDSPGAGAGMGGMGGMGGMDM) is disordered. Positions 532 to 547 (AGAGMGGMGGMGGMDM) are enriched in gly residues.

It belongs to the chaperonin (HSP60) family. Forms a cylinder of 14 subunits composed of two heptameric rings stacked back-to-back. Interacts with the co-chaperonin GroES.

It localises to the cytoplasm. It catalyses the reaction ATP + H2O + a folded polypeptide = ADP + phosphate + an unfolded polypeptide.. Its function is as follows. Together with its co-chaperonin GroES, plays an essential role in assisting protein folding. The GroEL-GroES system forms a nano-cage that allows encapsulation of the non-native substrate proteins and provides a physical environment optimized to promote and accelerate protein folding. This is Chaperonin GroEL from Nitrosomonas eutropha (strain DSM 101675 / C91 / Nm57).